The chain runs to 333 residues: Transaldolase (333 aa).

The Schiff-base intermediate with substrate role is filled by Lys135.

This sequence belongs to the transaldolase family. Type 1 subfamily. Homodimer.

The protein localises to the cytoplasm. The enzyme catalyses D-sedoheptulose 7-phosphate + D-glyceraldehyde 3-phosphate = D-erythrose 4-phosphate + beta-D-fructose 6-phosphate. It functions in the pathway carbohydrate degradation; pentose phosphate pathway; D-glyceraldehyde 3-phosphate and beta-D-fructose 6-phosphate from D-ribose 5-phosphate and D-xylulose 5-phosphate (non-oxidative stage): step 2/3. Transaldolase is important for the balance of metabolites in the pentose-phosphate pathway. This chain is Transaldolase, found in Prochlorococcus marinus (strain MIT 9312).